The primary structure comprises 248 residues: PF03932 family protein CutC (248 aa).

This sequence belongs to the CutC family. As to quaternary structure, homodimer.

Its subcellular location is the cytoplasm. The chain is PF03932 family protein CutC from Salmonella enteritidis PT4 (strain P125109).